A 149-amino-acid polypeptide reads, in one-letter code: Calmodulin (149 aa).

Ala-2 is modified (N-acetylalanine). EF-hand domains follow at residues 8–43 (EQIAEFKEAFSLFDKDGDGTITTKELGTVMRSLGQN), 44–79 (PTEAELQDMINEVDADGNGTIDFPEFLSLMARKMKD), 81–116 (DTEEELVEAFKVFDRDGNGLISAAELRHVMTNLGEK), and 117–149 (LTDEEVDEMIREADVDGDGHINYEEFVRMMMAK). Residues Asp-21, Asp-23, Asp-25, Thr-27, Glu-32, Asp-57, Asp-59, Asn-61, Thr-63, Glu-68, Asp-94, Asp-96, Asn-98, and Glu-105 each contribute to the Ca(2+) site. Lys-116 carries the N6,N6,N6-trimethyllysine modification. Ca(2+) is bound by residues Asp-130, Asp-132, Asp-134, His-136, and Glu-141.

The protein belongs to the calmodulin family.

Its function is as follows. Calmodulin mediates the control of a large number of enzymes, ion channels and other proteins by Ca(2+). Among the enzymes to be stimulated by the calmodulin-Ca(2+) complex are a number of protein kinases and phosphatases. The polypeptide is Calmodulin (Stylonychia lemnae (Ciliate)).